A 660-amino-acid chain; its full sequence is Bifunctional polymyxin resistance protein ArnA (660 aa).

The formyltransferase ArnAFT stretch occupies residues 1 to 304 (MKAVIFAYHD…ALGLVKGALL (304 aa)). Catalysis depends on H104, which acts as the Proton donor; for formyltransferase activity. (6R)-10-formyltetrahydrofolate is bound by residues R114 and 136–140 (TARAD). The dehydrogenase ArnADH stretch occupies residues 314–660 (RRTRVLILGV…QTVDLPDAAQ (347 aa)). Residues D347 and 368–369 (DI) each bind NAD(+). UDP-alpha-D-glucuronate contacts are provided by residues A393, Y398, and 432–433 (TS). E434 serves as the catalytic Proton acceptor; for decarboxylase activity. UDP-alpha-D-glucuronate contacts are provided by residues R460, N492, 526-535 (KLVDGGAQKR), and Y613. R619 acts as the Proton donor; for decarboxylase activity in catalysis.

This sequence in the N-terminal section; belongs to the Fmt family. UDP-L-Ara4N formyltransferase subfamily. The protein in the C-terminal section; belongs to the NAD(P)-dependent epimerase/dehydratase family. UDP-glucuronic acid decarboxylase subfamily. In terms of assembly, homohexamer, formed by a dimer of trimers.

The enzyme catalyses UDP-alpha-D-glucuronate + NAD(+) = UDP-beta-L-threo-pentopyranos-4-ulose + CO2 + NADH. The catalysed reaction is UDP-4-amino-4-deoxy-beta-L-arabinose + (6R)-10-formyltetrahydrofolate = UDP-4-deoxy-4-formamido-beta-L-arabinose + (6S)-5,6,7,8-tetrahydrofolate + H(+). It participates in nucleotide-sugar biosynthesis; UDP-4-deoxy-4-formamido-beta-L-arabinose biosynthesis; UDP-4-deoxy-4-formamido-beta-L-arabinose from UDP-alpha-D-glucuronate: step 1/3. It functions in the pathway nucleotide-sugar biosynthesis; UDP-4-deoxy-4-formamido-beta-L-arabinose biosynthesis; UDP-4-deoxy-4-formamido-beta-L-arabinose from UDP-alpha-D-glucuronate: step 3/3. Its pathway is bacterial outer membrane biogenesis; lipopolysaccharide biosynthesis. In terms of biological role, bifunctional enzyme that catalyzes the oxidative decarboxylation of UDP-glucuronic acid (UDP-GlcUA) to UDP-4-keto-arabinose (UDP-Ara4O) and the addition of a formyl group to UDP-4-amino-4-deoxy-L-arabinose (UDP-L-Ara4N) to form UDP-L-4-formamido-arabinose (UDP-L-Ara4FN). The modified arabinose is attached to lipid A and is required for resistance to polymyxin and cationic antimicrobial peptides. This chain is Bifunctional polymyxin resistance protein ArnA, found in Sodalis glossinidius (strain morsitans).